A 139-amino-acid polypeptide reads, in one-letter code: Acyl carrier protein 4, chloroplastic (139 aa).

A chloroplast-targeting transit peptide spans 1–55 (MASAAAGASICIKSASCSPLAPGRISSLRSVSLPVSRKSFPSLRSSKGSFARVSC). The Carrier domain maps to 59 to 134 (PETVAKVCRI…DAADLIEKLM (76 aa)). At Ser-94 the chain carries O-(pantetheine 4'-phosphoryl)serine.

This sequence belongs to the acyl carrier protein (ACP) family. 4'-phosphopantetheine is transferred from CoA to a specific serine of apo-ACP by acpS. This modification is essential for activity because fatty acids are bound in thioester linkage to the sulfhydryl of the prosthetic group.

It is found in the plastid. It localises to the chloroplast. The protein operates within lipid metabolism; fatty acid biosynthesis. Carrier of the growing fatty acid chain in fatty acid biosynthesis. The chain is Acyl carrier protein 4, chloroplastic (ACL1) from Cuphea lanceolata (Cigar flower).